The primary structure comprises 311 residues: Manganese-dependent inorganic pyrophosphatase (311 aa).

Mn(2+)-binding residues include His10, Asp14, Asp16, Asp75, His97, and Asp149.

Belongs to the PPase class C family. Homodimer. The cofactor is Mn(2+).

The enzyme catalyses diphosphate + H2O = 2 phosphate + H(+). This Methanothrix thermoacetophila (strain DSM 6194 / JCM 14653 / NBRC 101360 / PT) (Methanosaeta thermophila) protein is Manganese-dependent inorganic pyrophosphatase (ppaC).